The sequence spans 308 residues: Probable GTP 3',8-cyclase (308 aa).

The region spanning 4-222 is the Radical SAM core domain; the sequence is RFGRPLEDLR…KKLIRKKHFR (219 aa). Arginine 13 contributes to the GTP binding site. [4Fe-4S] cluster-binding residues include cysteine 20, cysteine 24, and cysteine 27. Residue lysine 60 participates in GTP binding. Glycine 64 lines the S-adenosyl-L-methionine pocket. Position 90 (threonine 90) interacts with GTP. Residue serine 114 coordinates S-adenosyl-L-methionine. Lysine 151 is a GTP binding site. [4Fe-4S] cluster contacts are provided by cysteine 245 and cysteine 248. 250–252 is a GTP binding site; sequence RIR. A [4Fe-4S] cluster-binding site is contributed by cysteine 262.

This sequence belongs to the radical SAM superfamily. MoaA family. [4Fe-4S] cluster serves as cofactor.

It carries out the reaction GTP + AH2 + S-adenosyl-L-methionine = (8S)-3',8-cyclo-7,8-dihydroguanosine 5'-triphosphate + 5'-deoxyadenosine + L-methionine + A + H(+). It functions in the pathway cofactor biosynthesis; molybdopterin biosynthesis. Catalyzes the cyclization of GTP to (8S)-3',8-cyclo-7,8-dihydroguanosine 5'-triphosphate. In Saccharolobus solfataricus (strain ATCC 35092 / DSM 1617 / JCM 11322 / P2) (Sulfolobus solfataricus), this protein is Probable GTP 3',8-cyclase.